The chain runs to 313 residues: 2,3-dihydroxyphenylpropionate/2,3-dihydroxicinnamic acid 1,2-dioxygenase (313 aa).

The active-site Proton donor is the His-116. His-180 functions as the Proton acceptor in the catalytic mechanism.

It belongs to the LigB/MhpB extradiol dioxygenase family. As to quaternary structure, homotetramer. Requires Fe(2+) as cofactor.

The enzyme catalyses 3-(2,3-dihydroxyphenyl)propanoate + O2 = (2Z,4E)-2-hydroxy-6-oxonona-2,4-dienedioate + H(+). It carries out the reaction (2E)-3-(2,3-dihydroxyphenyl)prop-2-enoate + O2 = (2Z,4E,7E)-2-hydroxy-6-oxonona-2,4,7-trienedioate + H(+). It participates in aromatic compound metabolism; 3-phenylpropanoate degradation. Functionally, catalyzes the non-heme iron(II)-dependent oxidative cleavage of 2,3-dihydroxyphenylpropionic acid and 2,3-dihydroxicinnamic acid into 2-hydroxy-6-ketononadienedioate and 2-hydroxy-6-ketononatrienedioate, respectively. This Mycobacterium sp. (strain MCS) protein is 2,3-dihydroxyphenylpropionate/2,3-dihydroxicinnamic acid 1,2-dioxygenase.